The following is a 437-amino-acid chain: Epsilon-sarcoglycan (437 aa).

At 1–317 the chain is on the extracellular side; sequence MLLFWWWELG…LKSRDYYTDF (317 aa). Asn-200 is a glycosylation site (N-linked (GlcNAc...) asparagine). The chain crosses the membrane as a helical span at residues 318 to 338; the sequence is LVTLAVPSAVALVLFLILAYI. At 339–437 the chain is on the cytoplasmic side; sequence MCCRREGVEK…QQQTTGKWYP (99 aa).

The protein belongs to the sarcoglycan alpha/epsilon family. N-glycosylated. In terms of processing, ubiquitinated, leading to its degradation by the proteasome. In terms of tissue distribution, in both neural tissues including cerebellar cortex, striatum, cerebral cortex, thalamus and hippocampus, and non-neural tissues including quadriceps muscle, liver, kidney, spleen, lung, testis and heart. Widely distributed in the brain, with a robust signal obtained from regions with dense neuronal packing such as the pyramidal cell layer of the hippocampus, cerebellar molecular layer, and cerebral cortex. Levels are highest in kidney, moderate in brain and lung, and low in skeletal muscle, liver, spleen and testis.

It localises to the cell membrane. The protein resides in the sarcolemma. Its subcellular location is the cytoplasm. The protein localises to the cytoskeleton. It is found in the cell projection. It localises to the dendrite. The protein resides in the golgi apparatus. Functionally, component of the sarcoglycan complex, a subcomplex of the dystrophin-glycoprotein complex which forms a link between the F-actin cytoskeleton and the extracellular matrix. The polypeptide is Epsilon-sarcoglycan (Rattus norvegicus (Rat)).